Consider the following 201-residue polypeptide: L(+)-tartrate dehydratase subunit beta (201 aa).

His-37 is a catalytic residue.

The protein belongs to the class-I fumarase family. As to quaternary structure, heterotetramer of two alpha and two beta subunits.

It catalyses the reaction (2R,3R)-tartrate = oxaloacetate + H2O. This is L(+)-tartrate dehydratase subunit beta (ttdB) from Shigella boydii serotype 4 (strain Sb227).